Reading from the N-terminus, the 148-residue chain is uncharacterized protein (148 aa).

Positions 4 to 65 constitute an HTH asnC-type domain; the sequence is MDKVDLQLIK…IPNLEKLNYM (62 aa). The segment at residues 23–42 is a DNA-binding region (H-T-H motif); sequence YRELAEMLGTTRQRVARKVD.

This is an uncharacterized protein from Pyrococcus furiosus (strain ATCC 43587 / DSM 3638 / JCM 8422 / Vc1).